The sequence spans 104 residues: Large ribosomal subunit protein bL21 (104 aa).

Belongs to the bacterial ribosomal protein bL21 family. Part of the 50S ribosomal subunit. Contacts protein L20.

Its function is as follows. This protein binds to 23S rRNA in the presence of protein L20. This chain is Large ribosomal subunit protein bL21, found in Streptococcus pneumoniae serotype 2 (strain D39 / NCTC 7466).